Reading from the N-terminus, the 491-residue chain is Protein nucleotidyltransferase YdiU (491 aa).

Positions 88, 90, 91, 111, 123, 124, 174, and 181 each coordinate ATP. The Proton acceptor role is filled by Asp-250. Mg(2+)-binding residues include Asn-251 and Asp-260. Asp-260 contributes to the ATP binding site.

It belongs to the SELO family. Mg(2+) serves as cofactor. Mn(2+) is required as a cofactor.

The catalysed reaction is L-seryl-[protein] + ATP = 3-O-(5'-adenylyl)-L-seryl-[protein] + diphosphate. It catalyses the reaction L-threonyl-[protein] + ATP = 3-O-(5'-adenylyl)-L-threonyl-[protein] + diphosphate. The enzyme catalyses L-tyrosyl-[protein] + ATP = O-(5'-adenylyl)-L-tyrosyl-[protein] + diphosphate. It carries out the reaction L-histidyl-[protein] + UTP = N(tele)-(5'-uridylyl)-L-histidyl-[protein] + diphosphate. The catalysed reaction is L-seryl-[protein] + UTP = O-(5'-uridylyl)-L-seryl-[protein] + diphosphate. It catalyses the reaction L-tyrosyl-[protein] + UTP = O-(5'-uridylyl)-L-tyrosyl-[protein] + diphosphate. Functionally, nucleotidyltransferase involved in the post-translational modification of proteins. It can catalyze the addition of adenosine monophosphate (AMP) or uridine monophosphate (UMP) to a protein, resulting in modifications known as AMPylation and UMPylation. In Rhodopseudomonas palustris (strain BisB18), this protein is Protein nucleotidyltransferase YdiU.